The primary structure comprises 1653 residues: Cortactin-binding protein 2 (1653 aa).

5 disordered regions span residues 1–27 (MATD…AEAA), 203–222 (KKKT…RSTE), 268–297 (QLKR…SVGT), 314–339 (ESTE…KGSV), and 356–609 (HGDL…PSID). A coiled-coil region spans residues 119–276 (RKMQERMSTQ…EQLKRGSDSK (158 aa)). A compositionally biased stretch (polar residues) spans 379-389 (GPSTGSPPDLT). Positions 390–408 (SSAAQSPAAAPHGLPPAHG) are enriched in low complexity. Composition is skewed to polar residues over residues 444–470 (GNAN…TSRD), 478–490 (ARNT…SRFT), and 573–584 (TVASSPPSSLPQ). Position 488 is an asymmetric dimethylarginine (Arg-488). ANK repeat units lie at residues 700–730 (GRPT…DINY), 734–763 (DGHS…QVNA), 767–796 (NGFT…HINH), 800–829 (GGQT…DRSV), and 833–862 (DGWT…PAHG). The interval 860 to 892 (AHGNSLNEEEPESDASDLDEGEESSEGKSKPVV) is disordered. A compositionally biased stretch (acidic residues) spans 866 to 883 (NEEEPESDASDLDEGEES). The ANK 6 repeat unit spans residues 903–933 (EGWTAAHIAASKGFKNCLEILCRHRGLEPER). Residues 1441–1472 (ESGAWRKVNTSPRRKSGRFSSPTWNKPDLSNE) are disordered. A Phosphoserine modification is found at Ser-1514. Residues 1545–1653 (DLRTFDSSGN…KNEHIEKLNK (109 aa)) are disordered. Polar residues-rich tracts occupy residues 1549-1564 (FDSS…TANN) and 1572-1589 (KEVS…SNNK). Positions 1614-1628 (SQNTKRSSSSSNTRQ) are enriched in low complexity. A compositionally biased stretch (basic and acidic residues) spans 1635–1653 (SKEENWNLHKNEHIEKLNK).

As to quaternary structure, interacts with CTTN/cortactin SH3 domain. Interacts with STRN, STRN4/zinedin and MOB4/phocein; this interactions mediate the association with the STRIPAK core complex and may regulate dendritic spine distribution of the STRIPAK complex in hippocampal neurons. Activation of glutamate receptors weakens the interaction with STRN and STRN4.

It localises to the cytoplasm. The protein resides in the cell cortex. The protein localises to the cell projection. It is found in the dendritic spine. Regulates the dendritic spine distribution of CTTN/cortactin in hippocampal neurons, and thus controls dendritic spinogenesis and dendritic spine maintenance. Associates with the striatin-interacting phosphatase and kinase (STRIPAK) core complex to regulate dendritic spine distribution of the STRIPAK complex in hippocampal neurons. The protein is Cortactin-binding protein 2 (CTTNBP2) of Eulemur macaco macaco (Black lemur).